A 160-amino-acid polypeptide reads, in one-letter code: Cytochrome b6-f complex subunit 4 (160 aa).

The next 3 membrane-spanning stretches (helical) occupy residues leucine 36 to valine 56, leucine 95 to glutamate 115, and alanine 131 to isoleucine 151.

Belongs to the cytochrome b family. PetD subfamily. As to quaternary structure, the 4 large subunits of the cytochrome b6-f complex are cytochrome b6, subunit IV (17 kDa polypeptide, PetD), cytochrome f and the Rieske protein, while the 4 small subunits are PetG, PetL, PetM and PetN. The complex functions as a dimer.

Its subcellular location is the cellular thylakoid membrane. In terms of biological role, component of the cytochrome b6-f complex, which mediates electron transfer between photosystem II (PSII) and photosystem I (PSI), cyclic electron flow around PSI, and state transitions. In Crocosphaera subtropica (strain ATCC 51142 / BH68) (Cyanothece sp. (strain ATCC 51142)), this protein is Cytochrome b6-f complex subunit 4.